The primary structure comprises 361 residues: Septin-2 (361 aa).

Tyrosine 17 carries the phosphotyrosine modification. In terms of domain architecture, Septin-type G spans 34–306; sequence KGFEFTLMVV…ENFRSERLKR (273 aa). Residues 44–51 form a G1 motif region; it reads GESGLGKS. Residues 44-51, threonine 78, glycine 104, and 183-191 each bind GTP; these read GESGLGKS and KADTLTLKE. Residues 101–104 form a G3 motif region; that stretch reads DTPG. The tract at residues 182–185 is G4 motif; it reads AKAD. Lysine 190 bears the N6-acetyllysine mark. At tyrosine 211 the chain carries Phosphotyrosine. Serine 218 carries the post-translational modification Phosphoserine. Residues glycine 241 and arginine 256 each contribute to the GTP site. The interval 260–270 is important for dimerization; the sequence is WGVVEVENPEH.

Belongs to the TRAFAC class TrmE-Era-EngA-EngB-Septin-like GTPase superfamily. Septin GTPase family. In terms of assembly, septins polymerize into heterooligomeric protein complexes that form filaments, and associate with cellular membranes, actin filaments and microtubules. GTPase activity is required for filament formation. Septin filaments are assembled from asymmetrical heterotrimers, composed of SEPTIN2, SEPTIN6 and SEPTIN7 that associate head-to-head to form a hexameric unit. Interaction between SEPTIN2 and SEPTIN7 seems indirect. Also interacts with SEPTIN9 and SEPTIN5. Interaction with SEPTIN4 not detected. Component of a septin core octameric complex consisting of SEPTIN12, SEPTIN7, SEPTIN6 and SEPTIN2 or SEPTIN4 in the order 12-7-6-2-2-6-7-12 or 12-7-6-4-4-6-7-12 and located in the sperm annulus. Interacts with MAP4. Interacts with DZIP1L.

The protein resides in the cytoplasm. It localises to the cytoskeleton. It is found in the spindle. Its subcellular location is the cleavage furrow. The protein localises to the midbody. The protein resides in the cell cortex. It localises to the cell projection. It is found in the cilium membrane. Its subcellular location is the cilium. The protein localises to the flagellum. Its function is as follows. Filament-forming cytoskeletal GTPase. Forms a filamentous structure with SEPTIN12, SEPTIN6, SEPTIN2 and probably SEPTIN4 at the sperm annulus which is required for the structural integrity and motility of the sperm tail during postmeiotic differentiation. Required for normal organization of the actin cytoskeleton. Plays a role in the biogenesis of polarized columnar-shaped epithelium by maintaining polyglutamylated microtubules, thus facilitating efficient vesicle transport, and by impeding MAP4 binding to tubulin. Required for the progression through mitosis. Forms a scaffold at the midplane of the mitotic splindle required to maintain CENPE localization at kinetochores and consequently chromosome congression. During anaphase, may be required for chromosome segregation and spindle elongation. Plays a role in ciliogenesis and collective cell movements. In cilia, required for the integrity of the diffusion barrier at the base of the primary cilium that prevents diffusion of transmembrane proteins between the cilia and plasma membranes: probably acts by regulating the assembly of the tectonic-like complex (also named B9 complex) by localizing TMEM231 protein. The polypeptide is Septin-2 (Rattus norvegicus (Rat)).